We begin with the raw amino-acid sequence, 262 residues long: Probable dihydroorotate dehydrogenase B (NAD(+)), electron transfer subunit (262 aa).

An FAD-binding FR-type domain is found at 4-97 (VKPIPAEVVE…RGPYGKPFEV (94 aa)). The [2Fe-2S] cluster site is built by Cys217, Cys222, Cys225, and Cys234.

This sequence belongs to the PyrK family. Heterotetramer of 2 PyrK and 2 PyrD type B subunits. The cofactor is [2Fe-2S] cluster. Requires FAD as cofactor.

Its pathway is pyrimidine metabolism; UMP biosynthesis via de novo pathway; orotate from (S)-dihydroorotate (NAD(+) route): step 1/1. In terms of biological role, responsible for channeling the electrons from the oxidation of dihydroorotate from the FMN redox center in the PyrD type B subunit to the ultimate electron acceptor NAD(+). The protein is Probable dihydroorotate dehydrogenase B (NAD(+)), electron transfer subunit of Methanopyrus kandleri (strain AV19 / DSM 6324 / JCM 9639 / NBRC 100938).